A 481-amino-acid chain; its full sequence is Bifunctional protein GlmU (481 aa).

The tract at residues 1 to 235 (MTHKERPLDV…PDEVMGANDR (235 aa)) is pyrophosphorylase. Residues 13–16 (LAAG), lysine 27, glutamine 78, 83–84 (GT), 107–109 (YGD), glycine 146, glutamate 161, asparagine 176, and asparagine 233 each bind UDP-N-acetyl-alpha-D-glucosamine. Aspartate 109 contributes to the Mg(2+) binding site. Asparagine 233 provides a ligand contact to Mg(2+). A linker region spans residues 236 to 256 (VQLAQAAAVLRRRINTAHMQA). Positions 257-481 (GVTLQDPSTI…PWLAGWLERQ (225 aa)) are N-acetyltransferase. UDP-N-acetyl-alpha-D-glucosamine is bound by residues arginine 339 and lysine 357. The Proton acceptor role is filled by histidine 369. UDP-N-acetyl-alpha-D-glucosamine-binding residues include tyrosine 372 and asparagine 383. The acetyl-CoA site is built by alanine 386, serine 411, alanine 429, and arginine 446.

In the N-terminal section; belongs to the N-acetylglucosamine-1-phosphate uridyltransferase family. The protein in the C-terminal section; belongs to the transferase hexapeptide repeat family. Homotrimer. The cofactor is Mg(2+).

It localises to the cytoplasm. It catalyses the reaction alpha-D-glucosamine 1-phosphate + acetyl-CoA = N-acetyl-alpha-D-glucosamine 1-phosphate + CoA + H(+). It carries out the reaction N-acetyl-alpha-D-glucosamine 1-phosphate + UTP + H(+) = UDP-N-acetyl-alpha-D-glucosamine + diphosphate. It participates in nucleotide-sugar biosynthesis; UDP-N-acetyl-alpha-D-glucosamine biosynthesis; N-acetyl-alpha-D-glucosamine 1-phosphate from alpha-D-glucosamine 6-phosphate (route II): step 2/2. The protein operates within nucleotide-sugar biosynthesis; UDP-N-acetyl-alpha-D-glucosamine biosynthesis; UDP-N-acetyl-alpha-D-glucosamine from N-acetyl-alpha-D-glucosamine 1-phosphate: step 1/1. Its pathway is bacterial outer membrane biogenesis; LPS lipid A biosynthesis. Its function is as follows. Catalyzes the last two sequential reactions in the de novo biosynthetic pathway for UDP-N-acetylglucosamine (UDP-GlcNAc). The C-terminal domain catalyzes the transfer of acetyl group from acetyl coenzyme A to glucosamine-1-phosphate (GlcN-1-P) to produce N-acetylglucosamine-1-phosphate (GlcNAc-1-P), which is converted into UDP-GlcNAc by the transfer of uridine 5-monophosphate (from uridine 5-triphosphate), a reaction catalyzed by the N-terminal domain. This Deinococcus geothermalis (strain DSM 11300 / CIP 105573 / AG-3a) protein is Bifunctional protein GlmU.